We begin with the raw amino-acid sequence, 307 residues long: Elongation factor Ts (307 aa).

The interval 80 to 83 (TDFV) is involved in Mg(2+) ion dislocation from EF-Tu.

Belongs to the EF-Ts family.

It is found in the cytoplasm. In terms of biological role, associates with the EF-Tu.GDP complex and induces the exchange of GDP to GTP. It remains bound to the aminoacyl-tRNA.EF-Tu.GTP complex up to the GTP hydrolysis stage on the ribosome. The sequence is that of Elongation factor Ts (tsf) from Zymomonas mobilis subsp. mobilis (strain ATCC 31821 / ZM4 / CP4).